The following is a 198-amino-acid chain: Ribonuclease HII (198 aa).

Residues 10-198 (HLVAGVDEVG…PVKRALELAS (189 aa)) form the RNase H type-2 domain. 3 residues coordinate a divalent metal cation: aspartate 16, glutamate 17, and aspartate 108.

This sequence belongs to the RNase HII family. Mn(2+) is required as a cofactor. The cofactor is Mg(2+).

It is found in the cytoplasm. It carries out the reaction Endonucleolytic cleavage to 5'-phosphomonoester.. Its function is as follows. Endonuclease that specifically degrades the RNA of RNA-DNA hybrids. The chain is Ribonuclease HII from Salmonella arizonae (strain ATCC BAA-731 / CDC346-86 / RSK2980).